The sequence spans 745 residues: 1,4-alpha-glucan branching enzyme GlgB (745 aa).

Catalysis depends on Asp-416, which acts as the Nucleophile. Residue Glu-469 is the Proton donor of the active site.

It belongs to the glycosyl hydrolase 13 family. GlgB subfamily. Monomer.

The enzyme catalyses Transfers a segment of a (1-&gt;4)-alpha-D-glucan chain to a primary hydroxy group in a similar glucan chain.. The protein operates within glycan biosynthesis; glycogen biosynthesis. Its function is as follows. Catalyzes the formation of the alpha-1,6-glucosidic linkages in glycogen by scission of a 1,4-alpha-linked oligosaccharide from growing alpha-1,4-glucan chains and the subsequent attachment of the oligosaccharide to the alpha-1,6 position. In Shewanella sp. (strain W3-18-1), this protein is 1,4-alpha-glucan branching enzyme GlgB.